A 159-amino-acid polypeptide reads, in one-letter code: Cell division protein SepF (159 aa).

Residues 23–69 (DYIEEDEEQKPASKSAFDSDHTVTPLASTTAPAASSTTKPFPGGRVN) are disordered. Positions 44–64 (TVTPLASTTAPAASSTTKPFP) are enriched in low complexity.

Belongs to the SepF family. Homodimer. Interacts with FtsZ.

The protein resides in the cytoplasm. Functionally, cell division protein that is part of the divisome complex and is recruited early to the Z-ring. Probably stimulates Z-ring formation, perhaps through the cross-linking of FtsZ protofilaments. Its function overlaps with FtsA. The protein is Cell division protein SepF of Bifidobacterium longum (strain DJO10A).